Here is a 197-residue protein sequence, read N- to C-terminus: Large ribosomal subunit protein bL9c (197 aa).

The N-terminal 42 residues, 1-42 (MASSTALSLSWSSSPCWSHSFNGGANETLKVSERRFNFEVVS), are a transit peptide targeting the chloroplast.

Belongs to the bacterial ribosomal protein bL9 family. Part of the 50S ribosomal subunit.

The protein localises to the plastid. It is found in the chloroplast. Its function is as follows. Binds to the 23S rRNA. In Arabidopsis thaliana (Mouse-ear cress), this protein is Large ribosomal subunit protein bL9c (RPL9).